The following is a 335-amino-acid chain: Biotin synthase (335 aa).

In terms of domain architecture, Radical SAM core spans 51 to 278; that stretch reads NTVQLSSLLS…LAKVRLSAGR (228 aa). [4Fe-4S] cluster-binding residues include cysteine 66, cysteine 70, and cysteine 73. Positions 110, 141, 201, and 273 each coordinate [2Fe-2S] cluster.

Belongs to the radical SAM superfamily. Biotin synthase family. Homodimer. Requires [4Fe-4S] cluster as cofactor. It depends on [2Fe-2S] cluster as a cofactor.

It catalyses the reaction (4R,5S)-dethiobiotin + (sulfur carrier)-SH + 2 reduced [2Fe-2S]-[ferredoxin] + 2 S-adenosyl-L-methionine = (sulfur carrier)-H + biotin + 2 5'-deoxyadenosine + 2 L-methionine + 2 oxidized [2Fe-2S]-[ferredoxin]. Its pathway is cofactor biosynthesis; biotin biosynthesis; biotin from 7,8-diaminononanoate: step 2/2. Catalyzes the conversion of dethiobiotin (DTB) to biotin by the insertion of a sulfur atom into dethiobiotin via a radical-based mechanism. This is Biotin synthase from Bordetella bronchiseptica (strain ATCC BAA-588 / NCTC 13252 / RB50) (Alcaligenes bronchisepticus).